A 164-amino-acid chain; its full sequence is ATP synthase B' chain, cyanelle (164 aa).

Residues Ala-26–Phe-46 traverse the membrane as a helical segment.

This sequence belongs to the ATPase B chain family. In terms of assembly, F-type ATPases have 2 components, F(1) - the catalytic core - and F(0) - the membrane proton channel. F(1) has five subunits: alpha(3), beta(3), gamma(1), delta(1), epsilon(1). F(0) has four main subunits: a(1), b(1), b'(1) and c(10-14). The alpha and beta chains form an alternating ring which encloses part of the gamma chain. F(1) is attached to F(0) by a central stalk formed by the gamma and epsilon chains, while a peripheral stalk is formed by the delta, b and b' chains.

It is found in the plastid. The protein resides in the cyanelle thylakoid membrane. F(1)F(0) ATP synthase produces ATP from ADP in the presence of a proton or sodium gradient. F-type ATPases consist of two structural domains, F(1) containing the extramembraneous catalytic core and F(0) containing the membrane proton channel, linked together by a central stalk and a peripheral stalk. During catalysis, ATP synthesis in the catalytic domain of F(1) is coupled via a rotary mechanism of the central stalk subunits to proton translocation. Its function is as follows. Component of the F(0) channel, it forms part of the peripheral stalk, linking F(1) to F(0). The b'-subunit is a diverged and duplicated form of b found in plants and photosynthetic bacteria. This chain is ATP synthase B' chain, cyanelle, found in Cyanophora paradoxa.